The following is a 1318-amino-acid chain: MDRQCSERPYSCTPTGRVSSAVSQNSRISPPVSTSMKDSSCMKVHQDSARRDRWSHPTTILLHKSQSSQATLMLQEHRMFMGEAYSAATGFKMLQDMNSADPFHLKYIIKKIKNMAHGSPKLVMETIHDYFIDNPEISSRHKFRLFQTLEMVIGASDVLEETWEKTFTRLALENMTKATELEDIYQDAASNMLVAICRHSWRVVAQHLETELLTGVFPHRSLLYVMGVLSSSEELFSQEDKACWEEQLIQMAIKSVPFLSTDVWSKELLWTLTTPSWTQQEQSPEKAFLFTYYGLILQAEKNGATVRRHLQALLETSHQWPKQREGMALTLGLAATRHLDDVWAVLDQFGRSRPIRWSLPSSSPKNSEDLRWKWASSTILLAYGQVAAKARAHILPWVDNIVSRMVFYFHYSSWDETLKQSFLTATLMLMGAVSRSEGAHSYEFFQTSELLQCLMVLMEKEPQDTLCTRSRQQAMHIASSLCKLRPPIDLERKSQLLSTCFRSVFALPLLDALEKHTCLFLEPPNIQLWPVARERAGWTHQGWGPRAVLHCSEHLQSLYSRTMEALDFMLQSLIMQNPTADELHFLLSHLYIWLASEKAHERQRAVHSCMILLKFLNHNGYLDPKEDFKRIGQLVGILGMLCQDPDRATQRCSLEGASHLYQLLMCHKTGEALQAESQAPKELSQAHSDGAPLWNSRDQKATPLGPQEMAKNHIFQLCSFQVIKDIMQQLTLAELSDLIWTAIDGLGSTSPFRVQAASEMLLTAVQEHGAKLEIVSSMAQAIRLRLCSVHIPQAKEKTLHAITLLARSHTCELVATFLNISIPLDSHTFQLWRALGAGQPTSHLVLTTLLACLQERPLPTGASDSSPCPKEKTYLRLLAAMNMLHELQFAREFKQAVQEGYPKLFLALLTQMHYVLELNLPSEPQPKQQAQEAAVPSPQSCSTSLEALKSLLSTTGHWHDFAHLELQGSWELFTTIHTYPKGVGLLARAMVQNHCRQIPAVLRQLLPSLQSPQERERKVAILILTKFLYSPVLLEVLPKQAALTVLAQGLHDPSPEVRVLSLQGLSNILFHPDKGSLLQGQLRPLLDGFFQSSDQVIVCIMGTVSDTLHRLGAQGTGSQSLGVAISTRSFFNDERDGIRAAAMALFGDLVAAMADRELSGLRTQVHQSMVPLLLHLKDQCPAVATQAKFTFYRCAVLLRWRLLHTLFCTLAWERGLSARHFLWTCLMTRSQEEFSIHLSQALSYLHSHSCHIKTWVTLFIGHTICYHPQAVFQMLNAVDTNLLFRTFEHLRSDPEPSIREFATSQLSFLQKVSARPKQ.

The interval 1-38 is disordered; that stretch reads MDRQCSERPYSCTPTGRVSSAVSQNSRISPPVSTSMKD. The segment covering 12-38 has biased composition (polar residues); that stretch reads CTPTGRVSSAVSQNSRISPPVSTSMKD. Residues 581-618 form an HEAT 1 repeat; sequence DELHFLLSHLYIWLASEKAHERQRAVHSCMILLKFLNH. The tract at residues 676-695 is disordered; the sequence is ESQAPKELSQAHSDGAPLWN. 8 HEAT repeats span residues 769-811, 840-880, 996-1033, 1037-1074, 1076-1113, 1118-1155, 1164-1200, and 1278-1315; these read GAKL…SHTC, PTSH…LLAA, RQIPAVLRQLLPSLQSPQERERKVAILILTKFLYSPVL, LPKQAALTVLAQGLHDPSPEVRVLSLQGLSNILFHPDK, SLLQGQLRPLLDGFFQSSDQVIVCIMGTVSDTLHRLGA, SQSLGVAISTRSFFNDERDGIRAAAMALFGDLVAAMAD, QVHQSMVPLLLHLKDQCPAVATQAKFTFYRCAVLLRW, and VDTNLLFRTFEHLRSDPEPSIREFATSQLSFLQKVSAR.

The sequence is that of Maestro heat-like repeat family member 5 (MROH5) from Homo sapiens (Human).